Reading from the N-terminus, the 98-residue chain is Acylphosphatase (98 aa).

Residues 12-98 (TYYVRVRGVV…ERRFERFQQQ (87 aa)) form the Acylphosphatase-like domain. Active-site residues include arginine 27 and asparagine 45.

This sequence belongs to the acylphosphatase family.

It carries out the reaction an acyl phosphate + H2O = a carboxylate + phosphate + H(+). In Burkholderia vietnamiensis (strain G4 / LMG 22486) (Burkholderia cepacia (strain R1808)), this protein is Acylphosphatase (acyP).